Consider the following 427-residue polypeptide: uncharacterized protein (427 aa).

The next 3 membrane-spanning stretches (helical) occupy residues 10–30, 43–63, and 71–91; these read LAYL…AGFW, KIIS…SKLA, and IFEI…SFIS. Thr-199 is subject to Phosphothreonine. Residue Ser-234 is modified to Phosphoserine. The next 5 membrane-spanning stretches (helical) occupy residues 253–273, 288–308, 327–347, 358–378, and 397–417; these read NLNP…IGPL, FAEA…VVLG, LLIG…LPII, ILDD…PPAI, and ILFW…VSGA.

Belongs to the auxin efflux carrier (TC 2.A.69) family.

The protein localises to the membrane. This is an uncharacterized protein from Saccharomyces cerevisiae (strain ATCC 204508 / S288c) (Baker's yeast).